The chain runs to 257 residues: UPF0246 protein lpl1317 (257 aa).

Belongs to the UPF0246 family.

In Legionella pneumophila (strain Lens), this protein is UPF0246 protein lpl1317.